The primary structure comprises 154 residues: Superoxide dismutase [Cu-Zn] (154 aa).

Cu cation is bound by residues H47, H49, and H64. C58 and C147 are joined by a disulfide. Zn(2+) is bound by residues H64, H72, H81, and D84. A Cu cation-binding site is contributed by H121. The segment covering 125-136 (DDLGKGGNEESL) has biased composition (basic and acidic residues). The disordered stretch occupies residues 125–144 (DDLGKGGNEESLKTGNAGPR). A substrate-binding site is contributed by R144.

This sequence belongs to the Cu-Zn superoxide dismutase family. As to quaternary structure, homodimer. It depends on Cu cation as a cofactor. Zn(2+) serves as cofactor.

It localises to the cytoplasm. It carries out the reaction 2 superoxide + 2 H(+) = H2O2 + O2. In terms of biological role, destroys radicals which are normally produced within the cells and which are toxic to biological systems. The chain is Superoxide dismutase [Cu-Zn] (SOD1) from Candida glabrata (strain ATCC 2001 / BCRC 20586 / JCM 3761 / NBRC 0622 / NRRL Y-65 / CBS 138) (Yeast).